Reading from the N-terminus, the 945-residue chain is Isoleucine--tRNA ligase (945 aa).

The short motif at 67-77 (PYANGQIHLGH) is the 'HIGH' region element. Glu573 is an L-isoleucyl-5'-AMP binding site. The short motif at 614 to 618 (KMSKS) is the 'KMSKS' region element. Position 617 (Lys617) interacts with ATP. Residues Cys908, Cys911, Cys928, and Cys931 each coordinate Zn(2+).

The protein belongs to the class-I aminoacyl-tRNA synthetase family. IleS type 1 subfamily. In terms of assembly, monomer. The cofactor is Zn(2+).

Its subcellular location is the cytoplasm. It carries out the reaction tRNA(Ile) + L-isoleucine + ATP = L-isoleucyl-tRNA(Ile) + AMP + diphosphate. Catalyzes the attachment of isoleucine to tRNA(Ile). As IleRS can inadvertently accommodate and process structurally similar amino acids such as valine, to avoid such errors it has two additional distinct tRNA(Ile)-dependent editing activities. One activity is designated as 'pretransfer' editing and involves the hydrolysis of activated Val-AMP. The other activity is designated 'posttransfer' editing and involves deacylation of mischarged Val-tRNA(Ile). The sequence is that of Isoleucine--tRNA ligase from Acinetobacter baylyi (strain ATCC 33305 / BD413 / ADP1).